A 196-amino-acid polypeptide reads, in one-letter code: Adenylyl-sulfate kinase (196 aa).

Position 31–38 (31–38 (GLSGAGKS)) interacts with ATP. The active-site Phosphoserine intermediate is Ser105.

This sequence belongs to the APS kinase family.

The catalysed reaction is adenosine 5'-phosphosulfate + ATP = 3'-phosphoadenylyl sulfate + ADP + H(+). It functions in the pathway sulfur metabolism; hydrogen sulfide biosynthesis; sulfite from sulfate: step 2/3. Functionally, catalyzes the synthesis of activated sulfate. The protein is Adenylyl-sulfate kinase of Aeromonas salmonicida (strain A449).